The following is a 311-amino-acid chain: DNA replication terminus site-binding protein (311 aa).

It belongs to the Tus family.

It localises to the cytoplasm. Functionally, trans-acting protein required for termination of DNA replication. Binds to DNA replication terminator sequences (terA to terF) to prevent the passage of replication forks. The termination efficiency will be affected by the affinity of this protein for the terminator sequence. The chain is DNA replication terminus site-binding protein from Yersinia pseudotuberculosis serotype O:1b (strain IP 31758).